The following is a 57-amino-acid chain: Large ribosomal subunit protein bL32 (57 aa).

Positions 1-23 are disordered; it reads MAVPKKKTSKSKRDKRRATWRHK.

It belongs to the bacterial ribosomal protein bL32 family.

The sequence is that of Large ribosomal subunit protein bL32 from Nostoc sp. (strain PCC 7120 / SAG 25.82 / UTEX 2576).